Here is a 392-residue protein sequence, read N- to C-terminus: Cyclic AMP receptor 1 (392 aa).

At 1–13 the chain is on the extracellular side; it reads MGLLDGNPANETS. Residue asparagine 10 is glycosylated (N-linked (GlcNAc...) asparagine). Residues 14–33 form a helical membrane-spanning segment; that stretch reads LVLLLFADFSSMLGCMAVLI. Over 34-47 the chain is Cytoplasmic; that stretch reads GFWRLKLLRNHVTK. The chain crosses the membrane as a helical span at residues 48–68; that stretch reads VIACFCATSFCKDFPSTILTL. At 69–83 the chain is on the extracellular side; sequence TNTAVNGGFPCYLYA. Residues 84-109 form a helical membrane-spanning segment; the sequence is IVITYGSFACWLWTLCLAISIYMLIV. At 110–120 the chain is on the cytoplasmic side; it reads KREPEPERFEK. Residues 121 to 139 traverse the membrane as a helical segment; that stretch reads YYYLLCWGLPLISTIVMLA. Residues 140–162 lie on the Extracellular side of the membrane; it reads KNTVQFVGNWCWIGVSFTGYRFG. Residues 163–181 traverse the membrane as a helical segment; it reads LFYGPFLFIWAISAVLVGL. The Cytoplasmic portion of the chain corresponds to 182–205; it reads TSRYTYVVIHNGVSDNKEKHLTYQ. The helical transmembrane segment at 206 to 224 threads the bilayer; sequence FKLINYIIVFLVCWVFAVV. The Extracellular segment spans residues 225 to 235; sequence NRIVNGLNMFP. The helical transmembrane segment at 236–260 threads the bilayer; that stretch reads PALNILHTYLSVSHGFWASVTFIYN. The Cytoplasmic segment spans residues 261 to 392; the sequence is NPLMWRYFGA…STSTNGQGNN (132 aa). Disordered regions lie at residues 292–324 and 339–392; these read NKNN…VQCS and VNNQ…QGNN. Residues 298–310 show a composition bias toward polar residues; sequence PSPYSSSRGTSGK. Residues serine 299, serine 302, serine 303, serine 304, serine 308, serine 360, serine 361, serine 362, serine 363, serine 364, serine 366, serine 367, and serine 368 each carry the phosphoserine modification. Residues 340–367 show a composition bias toward low complexity; sequence NNQQNLNNNYGLQQNYNDEGSSSSSLSS. Positions 375 to 392 are enriched in polar residues; that stretch reads VEMQNIQISTSTNGQGNN.

Belongs to the G-protein coupled receptor 5 family. In terms of processing, C-terminal Ser or Thr residues may be phosphorylated.

Its subcellular location is the membrane. Functionally, receptor for cAMP. Coordinates the aggregation of individual cells into a multicellular organism and regulates the expression of a large number of developmentally regulated genes. The activity of this receptor is mediated by G proteins. This chain is Cyclic AMP receptor 1 (carA-1), found in Dictyostelium discoideum (Social amoeba).